The chain runs to 441 residues: Probable xylan O-acetyltransferase 10 (441 aa).

The Cytoplasmic segment spans residues 1–19; it reads MMKPQHGGMAGHGGGRTRS. A helical; Signal-anchor for type II membrane protein transmembrane segment spans residues 20-40; that stretch reads PFLTSYALTLAFITFVSVLYF. Residues 41 to 441 lie on the Lumenal side of the membrane; sequence KDFSSTLHQP…ELLYSKLFFP (401 aa). Positions 50 to 81 are disordered; it reads PFLTRPPPHRRQIARPRAPSHHHGGGSSSGGG. The span at 56 to 73 shows a compositional bias: basic residues; that stretch reads PPHRRQIARPRAPSHHHG. 4 disulfides stabilise this stretch: Cys97/Cys148, Cys119/Cys184, Cys128/Cys422, and Cys341/Cys418. An N-linked (GlcNAc...) asparagine glycan is attached at Asn154. Positions 171–173 match the GDS motif motif; that stretch reads GDS. Ser173 acts as the Nucleophile in catalysis. Residues Asn212, Asn343, and Asn381 are each glycosylated (N-linked (GlcNAc...) asparagine). Residue Asp417 is the Proton donor of the active site. The DXXH motif motif lies at 417–420; it reads DCTH. The active-site Proton acceptor is the His420.

Belongs to the PC-esterase family. TBL subfamily. As to expression, expressed in roots, leaves and stems.

It localises to the golgi apparatus membrane. Functionally, probable xylan acetyltransferase required for 2-O- and 3-O-monoacetylation of xylosyl residues in xylan. Possesses extremely low activity in vitro. The chain is Probable xylan O-acetyltransferase 10 from Oryza sativa subsp. japonica (Rice).